The chain runs to 443 residues: Probable D-serine dehydratase (443 aa).

The residue at position 118 (Lys-118) is an N6-(pyridoxal phosphate)lysine.

It belongs to the serine/threonine dehydratase family. DsdA subfamily. Requires pyridoxal 5'-phosphate as cofactor.

It carries out the reaction D-serine = pyruvate + NH4(+). In Vibrio campbellii (strain ATCC BAA-1116), this protein is Probable D-serine dehydratase.